Here is a 354-residue protein sequence, read N- to C-terminus: Hyaluronan and proteoglycan link protein 1 (354 aa).

Positions 1–15 (MKSLLLLVLISICGA) are excised as a propeptide. Asn-21 and Asn-56 each carry an N-linked (GlcNAc...) asparagine glycan. The 115-residue stretch at 38–152 (PRLLVEAEQA…EGLEDDTAVV (115 aa)) folds into the Ig-like V-type domain. 5 disulfide bridges follow: Cys-61/Cys-139, Cys-181/Cys-252, Cys-205/Cys-226, Cys-279/Cys-349, and Cys-304/Cys-325. Link domains are found at residues 159-254 (VVFP…FCFT) and 259-351 (GRFY…YCFR).

The protein belongs to the HAPLN family.

The protein localises to the secreted. The protein resides in the extracellular space. Its subcellular location is the extracellular matrix. Functionally, stabilizes the aggregates of proteoglycan monomers with hyaluronic acid in the extracellular cartilage matrix. This chain is Hyaluronan and proteoglycan link protein 1 (HAPLN1), found in Equus caballus (Horse).